A 405-amino-acid chain; its full sequence is Zinc finger protein ubi-d4 (405 aa).

Disordered stretches follow at residues 80–147, 165–194, 210–230, and 248–280; these read RKKR…GEFP, DDLDDEDYEEDTPKRRGKGKAKGKGVGGAR, ACDNSYKQKHSLKPPDRVCGK, and AEEEGDDKDDSQPPTPVSQRSEEQKSKKGPDGL. Composition is skewed to basic and acidic residues over residues 100–110 and 126–140; these read PDTDQTLKKEG and DPLEKRSLPDPRMDD. Residues 165 to 174 are compositionally biased toward acidic residues; sequence DDLDDEDYEE. The C2H2-type; atypical zinc finger occupies 209 to 246; it reads YACDNSYKQKHSLKPPDRVCGKRYKNRPGLSYHYAHSH. Residues 267-277 show a composition bias toward basic and acidic residues; sequence RSEEQKSKKGP. 2 PHD-type zinc fingers span residues 284–344 and 341–391; these read NNYC…CKCC and CKCC…CLDL.

It belongs to the requiem/DPF family.

The protein resides in the cytoplasm. It localises to the nucleus. May be a transcription factor required for the apoptosis response following survival factor withdrawal from myeloid cells. Might also have a role in the development and maturation of lymphoid cells. This is Zinc finger protein ubi-d4 (REQ) from Gallus gallus (Chicken).